A 522-amino-acid polypeptide reads, in one-letter code: MEPGGARLRLQRTEGLGGERERQPCGDGNTETHRAPDLVQWTRHMEAVKAQLLEQAQGQLRELLDRAMREAIQSYPSQDKPLPPPPPGSLSRTQEPSLGKQKVFIIRKSLLDELMEVQHFRTIYHMFIAGLCVFIISTLAIDFIDEGRLLLEFDLLIFSFGQLPLALVTWVPMFLSTLLAPYQALRLWARGTWTQATGLGCALLAAHAVVLCALPVHVAVEHQLPPASRCVLVFEQVRFLMKSYSFLREAVPGTLRARRGEGIQAPSFSSYLYFLFCPTLIYRETYPRTPYVRWNYVAKNFAQALGCVLYACFILGRLCVPVFANMSREPFSTRALVLSILHATLPGIFMLLLIFFAFLHCWLNAFAEMLRFGDRMFYRDWWNSTSFSNYYRTWNVVVHDWLYSYVYQDGLRLLGARARGVAMLGVFLVSAVAHEYIFCFVLGFFYPVMLILFLVIGGMLNFMMHDQRTGPAWNVLMWTMLFLGQGIQVSLYCQEWYARRHCPLPQATFWGLVTPRSWSCHT.

Disordered stretches follow at residues 1-36 (MEPGGARLRLQRTEGLGGERERQPCGDGNTETHRAP) and 74-96 (SYPSQDKPLPPPPPGSLSRTQEP). Residues 1 to 120 (MEPGGARLRL…LDELMEVQHF (120 aa)) are Cytoplasmic-facing. Over residues 17 to 36 (GGERERQPCGDGNTETHRAP) the composition is skewed to basic and acidic residues. H119 contacts cholesterol. A helical transmembrane segment spans residues 121–142 (RTIYHMFIAGLCVFIISTLAID). The Lumenal portion of the chain corresponds to 143 to 162 (FIDEGRLLLEFDLLIFSFGQ). Residues 163–188 (LPLALVTWVPMFLSTLLAPYQALRLW) traverse the membrane as a helical segment. Topologically, residues 189–196 (ARGTWTQA) are cytoplasmic. Residues 197-220 (TGLGCALLAAHAVVLCALPVHVAV) form a helical membrane-spanning segment. Over 221-228 (EHQLPPAS) the chain is Lumenal. The chain crosses the membrane as a helical span at residues 229 to 252 (RCVLVFEQVRFLMKSYSFLREAVP). Residues 253-293 (GTLRARRGEGIQAPSFSSYLYFLFCPTLIYRETYPRTPYVR) lie on the Cytoplasmic side of the membrane. At C277 the chain carries Cysteine sulfenic acid (-SOH); alternate. C277 is covalently cross-linked (Glycyl cysteine thioester (Cys-Gly) (interchain with G-Cter in ubiquitin); alternate). The helical transmembrane segment at 294–326 (WNYVAKNFAQALGCVLYACFILGRLCVPVFANM) threads the bilayer. Residues 327–343 (SREPFSTRALVLSILHA) lie on the Lumenal side of the membrane. The helical transmembrane segment at 344–369 (TLPGIFMLLLIFFAFLHCWLNAFAEM) threads the bilayer. Over 370–417 (LRFGDRMFYRDWWNSTSFSNYYRTWNVVVHDWLYSYVYQDGLRLLGAR) the chain is Cytoplasmic. Residues 377-383 (FYRDWWN) carry the FYXDWWN motif motif. The an acyl-CoA site is built by N389, R392, N395, H399, Y407, and S430. The helical transmembrane segment at 418–442 (ARGVAMLGVFLVSAVAHEYIFCFVL) threads the bilayer. The active site involves H434. Over 443-448 (GFFYPV) the chain is Lumenal. A helical membrane pass occupies residues 449–464 (MLILFLVIGGMLNFMM). Residues 465–470 (HDQRTG) lie on the Cytoplasmic side of the membrane. Residues 471 to 502 (PAWNVLMWTMLFLGQGIQVSLYCQEWYARRHC) traverse the membrane as a helical segment. Residues 503 to 522 (PLPQATFWGLVTPRSWSCHT) are Lumenal-facing.

This sequence belongs to the membrane-bound acyltransferase family. Sterol o-acyltransferase subfamily. In terms of assembly, may form homo- or heterodimers. Interacts with INSIG1; the interaction is direct and promotes association with AMFR/gp78. Post-translationally, polyubiquitinated by AMFR/gp78 at Cys-277, leading to its degradation when the lipid levels are low. Association with AMFR/gp78 is mediated via interaction with INSIG1. High concentration of cholesterol and fatty acid results in Cys-277 oxidation, preventing ubiquitination at the same site, resulting in protein stabilization. In terms of processing, oxidized at Cys-277: high concentration of cholesterol and fatty acid induce reactive oxygen species, which oxidizes Cys-277, preventing ubiquitination at the same site, and resulting in protein stabilization. Expression seems confined in hepatocytes and enterocytes.

The protein resides in the endoplasmic reticulum membrane. The catalysed reaction is a sterol + a long-chain fatty acyl-CoA = a long-chain 3-hydroxysterol ester + CoA. The enzyme catalyses cholesterol + an acyl-CoA = a cholesterol ester + CoA. It catalyses the reaction cholesterol + (9Z)-octadecenoyl-CoA = cholesteryl (9Z-octadecenoate) + CoA. It carries out the reaction (5Z,8Z,11Z,14Z,17Z)-eicosapentaenoyl-CoA + cholesterol = (5Z,8Z,11Z,14Z,17Z-eicosapentaenoyl)-cholesterol + CoA. The catalysed reaction is (9Z,12Z,15Z)-octadecatrienoyl-CoA + cholesterol = (9Z,12Z,15Z-octadecatrienoyl)-cholesterol + CoA. The enzyme catalyses (5Z,8Z,11Z,14Z)-eicosatetraenoyl-CoA + cholesterol = cholesteryl (5Z,8Z,11Z,14Z)-eicosatetraenoate + CoA. Catalyzes the formation of fatty acid-cholesterol esters, which are less soluble in membranes than cholesterol. Plays a role in lipoprotein assembly and dietary cholesterol absorption. Utilizes oleoyl-CoA ((9Z)-octadecenoyl-CoA) and linolenoyl-CoA ((9Z,12Z,15Z)-octadecatrienoyl-CoA) as substrates. May provide cholesteryl esters for lipoprotein secretion from hepatocytes and intestinal mucosa. Its function is as follows. Has lower enzymatic activity compared to isoform 1. The polypeptide is Sterol O-acyltransferase 2 (Homo sapiens (Human)).